The sequence spans 330 residues: Pantothenate synthetase 2 (330 aa).

The active-site Proton donor is the histidine 55. ATP is bound by residues glycine 167–aspartate 170, valine 196, and alanine 204–arginine 207.

This sequence belongs to the pantothenate synthetase family. As to quaternary structure, homodimer.

Its subcellular location is the cytoplasm. It catalyses the reaction (R)-pantoate + beta-alanine + ATP = (R)-pantothenate + AMP + diphosphate + H(+). It functions in the pathway cofactor biosynthesis; (R)-pantothenate biosynthesis; (R)-pantothenate from (R)-pantoate and beta-alanine: step 1/1. In terms of biological role, catalyzes the condensation of pantoate with beta-alanine in an ATP-dependent reaction via a pantoyl-adenylate intermediate. This chain is Pantothenate synthetase 2, found in Frankia alni (strain DSM 45986 / CECT 9034 / ACN14a).